Consider the following 332-residue polypeptide: Fe(3+) dicitrate transport system permease protein FecC (332 aa).

Over 1–7 the chain is Cytoplasmic; it reads MTAIKHP. Residues 8–28 traverse the membrane as a helical segment; sequence VLLWGLPVAALIIIFWLSLFC. The Periplasmic portion of the chain corresponds to 29–64; sequence YSAIPVSGADATRALLPGHTPTLPEALVQNLRLPRS. Residues 65–85 traverse the membrane as a helical segment; that stretch reads LVAVLIGASLALAGTLLQTLT. Residues 86–100 are Cytoplasmic-facing; sequence HNPMASPSLLGINSG. The helical transmembrane segment at 101-121 threads the bilayer; the sequence is AALAMALTSALSPTPIAGYSL. Serine 122 is a topological domain (periplasmic). The chain crosses the membrane as a helical span at residues 123–143; sequence FIAACGGGVSWLLVMTAGGGF. The Cytoplasmic segment spans residues 144–151; the sequence is RHTHDRNK. A helical membrane pass occupies residues 152–172; the sequence is LILAGIALSAFCMGLTRITLL. The Periplasmic segment spans residues 173–199; it reads LAEDHAYGIFYWLAGGVSHARWQDVWQ. The chain crosses the membrane as a helical span at residues 200-220; it reads LLPVVVTAVPVVLLLANQLNL. At 221 to 244 the chain is on the cytoplasmic side; sequence LNLSDSTAHTLGVNLTRLRLVINM. A helical transmembrane segment spans residues 245–265; sequence LVLLLVGACVSVAGPVAFIGL. The Periplasmic segment spans residues 266–307; it reads LVPHLARFWAGFDQRNVLPVSMLLGATLMLLADVLARALAFP. Residues 308–328 traverse the membrane as a helical segment; the sequence is GDLPAGAVLALIGSPCFVWLV. Residues 329-332 lie on the Cytoplasmic side of the membrane; sequence RRRG.

The protein belongs to the binding-protein-dependent transport system permease family. FecCD subfamily. As to quaternary structure, the complex is composed of two ATP-binding proteins (FecE), two transmembrane proteins (FecC and FecD) and a solute-binding protein (FecB). Interacts with FecB.

Its subcellular location is the cell inner membrane. Its function is as follows. Part of the ABC transporter complex FecBCDE involved in citrate-dependent Fe(3+) uptake. Probably responsible for the translocation of the substrate across the membrane. In Escherichia coli (strain K12), this protein is Fe(3+) dicitrate transport system permease protein FecC.